A 196-amino-acid polypeptide reads, in one-letter code: GTP cyclohydrolase 1 (196 aa).

Residues C84, H87, and C157 each coordinate Zn(2+).

It belongs to the GTP cyclohydrolase I family. In terms of assembly, toroid-shaped homodecamer, composed of two pentamers of five dimers.

It catalyses the reaction GTP + H2O = 7,8-dihydroneopterin 3'-triphosphate + formate + H(+). It participates in cofactor biosynthesis; 7,8-dihydroneopterin triphosphate biosynthesis; 7,8-dihydroneopterin triphosphate from GTP: step 1/1. The polypeptide is GTP cyclohydrolase 1 (Corynebacterium glutamicum (strain R)).